A 693-amino-acid polypeptide reads, in one-letter code: Elongation factor G (693 aa).

The tr-type G domain maps to Glu9–Val283. GTP-binding positions include Ala18–Thr25, Asp82–His86, and Asn136–Asp139.

It belongs to the TRAFAC class translation factor GTPase superfamily. Classic translation factor GTPase family. EF-G/EF-2 subfamily.

Its subcellular location is the cytoplasm. In terms of biological role, catalyzes the GTP-dependent ribosomal translocation step during translation elongation. During this step, the ribosome changes from the pre-translocational (PRE) to the post-translocational (POST) state as the newly formed A-site-bound peptidyl-tRNA and P-site-bound deacylated tRNA move to the P and E sites, respectively. Catalyzes the coordinated movement of the two tRNA molecules, the mRNA and conformational changes in the ribosome. This Dehalococcoides mccartyi (strain ATCC BAA-2266 / KCTC 15142 / 195) (Dehalococcoides ethenogenes (strain 195)) protein is Elongation factor G.